A 276-amino-acid polypeptide reads, in one-letter code: Formamidopyrimidine-DNA glycosylase (276 aa).

The Schiff-base intermediate with DNA role is filled by Pro2. Glu3 serves as the catalytic Proton donor. Lys58 functions as the Proton donor; for beta-elimination activity in the catalytic mechanism. His92, Arg111, and Lys154 together coordinate DNA. The segment at 239–273 (QVYGHAGEECNNCGTILEKIKVNGRGTTFCPHCQV) adopts an FPG-type zinc-finger fold. Arg263 acts as the Proton donor; for delta-elimination activity in catalysis.

Belongs to the FPG family. Monomer. It depends on Zn(2+) as a cofactor.

It catalyses the reaction Hydrolysis of DNA containing ring-opened 7-methylguanine residues, releasing 2,6-diamino-4-hydroxy-5-(N-methyl)formamidopyrimidine.. The catalysed reaction is 2'-deoxyribonucleotide-(2'-deoxyribose 5'-phosphate)-2'-deoxyribonucleotide-DNA = a 3'-end 2'-deoxyribonucleotide-(2,3-dehydro-2,3-deoxyribose 5'-phosphate)-DNA + a 5'-end 5'-phospho-2'-deoxyribonucleoside-DNA + H(+). Involved in base excision repair of DNA damaged by oxidation or by mutagenic agents. Acts as a DNA glycosylase that recognizes and removes damaged bases. Has a preference for oxidized purines, such as 7,8-dihydro-8-oxoguanine (8-oxoG). Has AP (apurinic/apyrimidinic) lyase activity and introduces nicks in the DNA strand. Cleaves the DNA backbone by beta-delta elimination to generate a single-strand break at the site of the removed base with both 3'- and 5'-phosphates. The sequence is that of Formamidopyrimidine-DNA glycosylase from Lactobacillus johnsonii (strain CNCM I-12250 / La1 / NCC 533).